A 453-amino-acid polypeptide reads, in one-letter code: Na(+)/H(+) antiporter NhaA (453 aa).

The next 11 membrane-spanning stretches (helical) occupy residues 28–48 (FLHI…AALI), 79–99 (LHFL…GMEI), 115–135 (ALPL…YFIL), 144–164 (GWAV…ALLG), 173–193 (VFLL…IAVF), 196–216 (GGMD…VLGM), 241–261 (TGAH…VFAP), 321–341 (VAFG…LDGI), 355–375 (VLIA…FLMV), 393–413 (LVGL…TLAF), and 424–444 (LGIL…GFFQ).

Belongs to the NhaA Na(+)/H(+) (TC 2.A.33) antiporter family.

The protein resides in the cell inner membrane. It catalyses the reaction Na(+)(in) + 2 H(+)(out) = Na(+)(out) + 2 H(+)(in). Its function is as follows. Na(+)/H(+) antiporter that extrudes sodium in exchange for external protons. The sequence is that of Na(+)/H(+) antiporter NhaA from Janthinobacterium sp. (strain Marseille) (Minibacterium massiliensis).